We begin with the raw amino-acid sequence, 354 residues long: DnaJ homolog shv (354 aa).

The signal sequence occupies residues 1-22; the sequence is MQLIKCLVIIQLSLLLVEESFA. A J domain is found at 25-90; sequence DFYKILNVKK…DKRKTYDRCG (66 aa). N-linked (GlcNAc...) asparagine glycans are attached at residues Asn260 and Asn312.

In the testes, detected at low levels in somatic hub cells, cyst stem cells and the apical tip (at protein level). Levels in the testes decrease with age (at protein level). Expressed at low levels in hub cells, cyst stem cells and germline stem cells, and at high levels in spermatocytes and cyst cells.

The protein resides in the nucleus. Its subcellular location is the cell membrane. The protein localises to the secreted. Maintains stem cell niche architecture in the testes. Activates an extracellular integrin beta-PS pathway which regulates DE-cadherin (shg) levels in somatic hub cells, and is essential for maintaining the number of germline stem cells and the structure and localization of hub cells. The protein is DnaJ homolog shv of Drosophila melanogaster (Fruit fly).